A 142-amino-acid chain; its full sequence is Galactose-binding lectin (142 aa).

The 141-residue stretch at 1-141 (TYAEVESFGV…GTDIWDLLLL (141 aa)) folds into the Galectin domain.

In terms of assembly, homotetramer.

Its activity is regulated as follows. Cytotoxic activity against L.infantum promastigotes is completely inhibited by D-galactose. Inhibition activity against biofilm formation by S.aureus and S.epidermidis is inhibited by alpha-lactose. Hemagglutination activity is inhibited by alpha-lactose (MIC=100 mM), beta-lactose (MIC=100 mM), lactulose (MIC=100 mM), bovine submaxillary mucin (BSM) (MIC=32 ug/ml), fetuin (MIC=16 ug/ml), porcine stomach mucin (PSM) type 2 (MIC=8 ug/ml) and PSM type 3 (MIC=8 ug/ml). In terms of biological role, galactose-binding lectin. Displays antibacterial and hemagglutinin activity. Inhibits the growth of L.infantum promastigotes by damaging their membrane integrity and inducing cell apoptosis via the production of reactive oxygen species (ROS). Inhibition of L.infantum promastigotes appears to increase with time (MIC=1.2 uM/ml after 24 hours, MIC=0.9 uM/ml after 48 hours and MIC=0.6 uM/ml after 72 hours). Agglutinates Gram-negative and Gram-positive bacteria including E.coli, S.aureus and S.epidermidis, and inhibits biofilm formation by S.aureus and S.epidermidis. Displays hemagglutination activity towards all types of human erythrocytes (O, A and B) and rabbit erythrocytes. This Chondrilla caribensis (Chicken liver sponge) protein is Galactose-binding lectin.